The sequence spans 78 residues: DNA-directed RNA polymerase subunit omega (78 aa).

This sequence belongs to the RNA polymerase subunit omega family. In terms of assembly, in cyanobacteria the RNAP catalytic core is composed of 2 alpha, 1 beta, 1 beta', 1 gamma and 1 omega subunit. When a sigma factor is associated with the core the holoenzyme is formed, which can initiate transcription.

It carries out the reaction RNA(n) + a ribonucleoside 5'-triphosphate = RNA(n+1) + diphosphate. In terms of biological role, promotes RNA polymerase assembly. Latches the N- and C-terminal regions of the beta' subunit thereby facilitating its interaction with the beta and alpha subunits. This is DNA-directed RNA polymerase subunit omega from Trichormus variabilis (strain ATCC 29413 / PCC 7937) (Anabaena variabilis).